A 140-amino-acid chain; its full sequence is Peptide methionine sulfoxide reductase MsrB (140 aa).

The 123-residue stretch at 9-131 folds into the MsrB domain; it reads DALWREKLTP…NSASIVLDSE (123 aa). 4 residues coordinate Zn(2+): Cys48, Cys51, Cys97, and Cys100. Cys120 (nucleophile) is an active-site residue.

This sequence belongs to the MsrB Met sulfoxide reductase family. The cofactor is Zn(2+).

It catalyses the reaction L-methionyl-[protein] + [thioredoxin]-disulfide + H2O = L-methionyl-(R)-S-oxide-[protein] + [thioredoxin]-dithiol. This Cellvibrio japonicus (strain Ueda107) (Pseudomonas fluorescens subsp. cellulosa) protein is Peptide methionine sulfoxide reductase MsrB.